Reading from the N-terminus, the 574-residue chain is DNA polymerase alpha subunit B (574 aa).

Belongs to the DNA polymerase alpha subunit B family. As to quaternary structure, component of the alpha DNA polymerase complex (also known as the alpha DNA polymerase-primase complex) consisting of four subunits: the catalytic subunit pol1, the accessory subunit spb70/pol12, and the primase complex subunits spp1/pri1 and spp2/pri2 respectively. Interacts with orc1. Interacts with orc2; the interaction occurs on the chromatin, is stable thoughout the cell cycle and is independent from spb70 role in the alpha DNA polymerase complex. In terms of processing, phosphorylated in a cell cycle-dependent manner.

It is found in the nucleus. The protein resides in the chromosome. Its function is as follows. Accessory subunit of the DNA polymerase alpha complex (also known as the alpha DNA polymerase-primase complex) which plays an essential role in the initiation of DNA synthesis. During the S phase of the cell cycle, the DNA polymerase alpha complex (composed of a catalytic subunit pol1, an accessory subunit spb70/pol12 and two primase subunits, the catalytic subunit spp1/pri1 and the regulatory subunit spp2/pri2) is recruited to DNA at the replicative forks. The primase subunit of the polymerase alpha complex initiates DNA synthesis by oligomerising short RNA primers on both leading and lagging strands. The chain is DNA polymerase alpha subunit B from Schizosaccharomyces pombe (strain 972 / ATCC 24843) (Fission yeast).